Reading from the N-terminus, the 497-residue chain is Nucleoside transporter 1 (497 aa).

Topologically, residues 1–26 are cytoplasmic; the sequence is MSLKGGTAAPAPMAPPRKWYDMTSAE. The chain crosses the membrane as a helical span at residues 27-47; sequence FYVYVVAFMCGISIMMPINAV. The Extracellular segment spans residues 48–77; sequence FSAPSYMLEYYLYATKDPFLVPKMTNFWTN. A helical transmembrane segment spans residues 78 to 98; the sequence is VMTYYNLISMVTSLVVEPLTL. Topologically, residues 99 to 107 are cytoplasmic; it reads LKSFRKIPM. The helical transmembrane segment at 108–128 threads the bilayer; the sequence is LVRLLGGLSVLIIEIIVLMVV. Over 129-135 the chain is Extracellular; that stretch reads PARGTTE. Residues 136–156 traverse the membrane as a helical segment; it reads AGAVATMCIAGFIGGLGTSIF. The Cytoplasmic portion of the chain corresponds to 157–172; that stretch reads ESTVYGMFGAFPPSFT. Residues 173 to 193 traverse the membrane as a helical segment; sequence SIMMGGVGISGVLTSLIQIIV. Topologically, residues 194–208 are extracellular; the sequence is KAALPDTYEGVKKQS. Residues 209-229 form a helical membrane-spanning segment; the sequence is YIYYSLDVGIQAATFIALIMM. Over 230 to 337 the chain is Cytoplasmic; that stretch reads RFNSFAQLHF…SVFSVLRSVK (108 aa). The segment covering 286-299 has biased composition (basic and acidic residues); sequence NAEAHKDDPLAERE. The interval 286–316 is disordered; the sequence is NAEAHKDDPLAERELSEEESGDSRAVEAAGE. A helical membrane pass occupies residues 338 to 358; the sequence is WMFVACGFNFLITLFLFPGIA. The Extracellular segment spans residues 359–361; the sequence is TGM. A helical membrane pass occupies residues 362 to 382; the sequence is FPESKWFATVAVFIFNCCDVL. Residues 383–400 lie on the Cytoplasmic side of the membrane; it reads GRFSSAFRITWPRRYNQR. Residues 401 to 421 traverse the membrane as a helical segment; that stretch reads WIIVAASFARVIFVPLLLLHS. Residues 422-432 are Extracellular-facing; it reads YHYIPSEAYGY. The chain crosses the membrane as a helical span at residues 433–453; sequence VMQVVFGLSSGYIASMALVLG. Residues 454–465 lie on the Cytoplasmic side of the membrane; that stretch reads PQSKGIDNDGKR. Residues 466–486 form a helical membrane-spanning segment; that stretch reads FVAGTLMGISILVGGTIGTVL. The Extracellular portion of the chain corresponds to 487 to 497; it reads SIMTQTIRETY.

This sequence belongs to the SLC29A/ENT transporter (TC 2.A.57) family.

The protein resides in the cell membrane. The catalysed reaction is adenosine(in) = adenosine(out). The enzyme catalyses hypoxanthine(out) = hypoxanthine(in). It catalyses the reaction inosine(in) = inosine(out). It carries out the reaction uridine(out) = uridine(in). The catalysed reaction is cytidine(in) = cytidine(out). In terms of biological role, nucleoside transporter with broad substrate specificity. Transports adenosine with high affinity. Can also transport hypoxanthine, inosine, uridine and cytidine. The sequence is that of Nucleoside transporter 1 from Crithidia fasciculata.